Consider the following 317-residue polypeptide: MKILAIESSCDEFSISIIDDGKILTNIISSQIDQHVNFGGVVPELAARLHLENISWVIKSALESSNTKIEEIDHVAYTEKPGLIGSLIIGKLVAETIASYIDKPLMPLHHIEGHIYGASIENEFVYPVLAMVVSGGHTQIEIVNSPNEFEVIGATLDDAIGECYDKVARVMGLGYPGGPKIDKLAQKGNKEAFIFPISKNDDSYDFSYSGLKTAVINIIHNLTQKGEEIPVADIAASFQYAATKIVEKKLEKAIIQFKPKTLTVAGGVSANSEIRNIIMSLGKKYNITNTFVPKMEYCTDNAAMIAKLAYEKLKSSN.

Residues H110 and H114 each coordinate Fe cation. Substrate is bound by residues 132-136 (VVSGG), D165, G178, D182, and N271. D300 is a Fe cation binding site.

This sequence belongs to the KAE1 / TsaD family. The cofactor is Fe(2+).

It is found in the cytoplasm. It carries out the reaction L-threonylcarbamoyladenylate + adenosine(37) in tRNA = N(6)-L-threonylcarbamoyladenosine(37) in tRNA + AMP + H(+). Functionally, required for the formation of a threonylcarbamoyl group on adenosine at position 37 (t(6)A37) in tRNAs that read codons beginning with adenine. Is involved in the transfer of the threonylcarbamoyl moiety of threonylcarbamoyl-AMP (TC-AMP) to the N6 group of A37, together with TsaE and TsaB. TsaD likely plays a direct catalytic role in this reaction. This chain is tRNA N6-adenosine threonylcarbamoyltransferase, found in Mesoplasma florum (strain ATCC 33453 / NBRC 100688 / NCTC 11704 / L1) (Acholeplasma florum).